The primary structure comprises 246 residues: Tyrosine recombinase XerD-like (246 aa).

Positions 1-72 (MINDINNFIE…AVNQFLFFLY (72 aa)) constitute a Core-binding (CB) domain. The Tyr recombinase domain occupies 84-246 (QETEKITLAQ…TPITLERYYR (163 aa)). Active-site residues include K149 and R212. The O-(3'-phospho-DNA)-tyrosine intermediate role is filled by Y244.

This sequence belongs to the 'phage' integrase family. XerD-like subfamily.

The protein resides in the cytoplasm. Putative tyrosine recombinase. Not involved in the cutting and rejoining of the recombining DNA molecules on dif(SL) site. The polypeptide is Tyrosine recombinase XerD-like (Streptococcus agalactiae serotype V (strain ATCC BAA-611 / 2603 V/R)).